A 263-amino-acid chain; its full sequence is MADSDEWDADNFEPNEPIKIATAGRLDRWEGEDEEEDVKDNWDDEEEEKEEEKKVEQKIAEVKPPEKKKLSDKIKEKELLQKKKQEELKKNQETAASESLTLEEQLAEKARLKKLQEEADMELAREAFGVDPAAANASTTVNTTNASGIEAMCPSSKDDFVTFEKLLKEKITQFEKSVHYPSFLESLFRELCISLEVDDLKKISTSLSVLLTEKQKQEKEKKANKKKKKGVVPGGGLKANMKDDFADYGGFDGGYGNEYDDFM.

Acidic residues-rich tracts occupy residues 1–13 (MADS…DNFE) and 30–50 (EGED…EEKE). 2 disordered regions span residues 1–75 (MADS…DKIK) and 214–235 (KQKQ…VPGG). Positions 30–127 (EGEDEEEDVK…EADMELAREA (98 aa)) form a coiled coil. Residues 51 to 75 (EEKKVEQKIAEVKPPEKKKLSDKIK) show a composition bias toward basic and acidic residues.

Belongs to the eIF-3 subunit J family. Component of the eukaryotic translation initiation factor 3 (eIF-3) complex, which is composed of 13 subunits: eif3a, eif3b, eif3c, eif3d, eif3e, eif3f, eif3g, eif3h, eif3i, eif3j, eif3k, eif3l and eif3m.

The protein resides in the cytoplasm. In terms of biological role, component of the eukaryotic translation initiation factor 3 (eIF-3) complex, which is involved in protein synthesis of a specialized repertoire of mRNAs and, together with other initiation factors, stimulates binding of mRNA and methionyl-tRNAi to the 40S ribosome. The eIF-3 complex specifically targets and initiates translation of a subset of mRNAs involved in cell proliferation. This is Eukaryotic translation initiation factor 3 subunit J-B (eif3jb) from Danio rerio (Zebrafish).